A 97-amino-acid chain; its full sequence is Putative septation protein SpoVG (97 aa).

It belongs to the SpoVG family.

Its function is as follows. Essential for sporulation. Interferes with or is a negative regulator of the pathway leading to asymmetric septation. The protein is Putative septation protein SpoVG of Bacillus cytotoxicus (strain DSM 22905 / CIP 110041 / 391-98 / NVH 391-98).